Consider the following 274-residue polypeptide: uncharacterized protein (274 aa).

Positions 1–15 (MEESKTKRKEDRIDL) are enriched in basic and acidic residues. Residues 1–40 (MEESKTKRKEDRIDLKNTPPQKKSKRDSTNDETARTSLRS) are disordered. In terms of domain architecture, G-patch spans 41–87 (IMPRGYKMMENMGYKEGETLGSNESALKEPIKVEINTKRRGIRAEKP).

The protein localises to the cytoplasm. It is found in the nucleus. This is an uncharacterized protein from Saccharomyces cerevisiae (strain ATCC 204508 / S288c) (Baker's yeast).